We begin with the raw amino-acid sequence, 590 residues long: Multidrug and toxin extrusion protein 1 (590 aa).

Residues 1–59 (MDSITSYNVTQMNGDTKQEKCDDVLSTSSTQKFCGGCRKKLRSLLPVNYKTEIVELLKL) lie on the Cytoplasmic side of the membrane. A helical transmembrane segment spans residues 60 to 80 (AGPVFISQLMIFLISFVSTVF). Over 81-88 (CGHLGKTE) the chain is Extracellular. The helical transmembrane segment at 89–109 (LAGVALAIAVINVTGISIGSG) threads the bilayer. Topologically, residues 110–137 (LASACDTLISQTFGSNNLKRVGVILQRG) are cytoplasmic. The chain crosses the membrane as a helical span at residues 138-158 (ILILLLACFPCWALLINTEPI). Residues 159–167 (LLAVRQSPN) lie on the Extracellular side of the membrane. A helical membrane pass occupies residues 168 to 188 (VASLSQLYVKIFMPALPAAFM). Over 189 to 199 (YQLQGRYLQNQ) the chain is Cytoplasmic. The helical transmembrane segment at 200–222 (GIIWPQVITGAAGNILNALINYV) threads the bilayer. Residues 223–231 (FLHLLELGV) are Extracellular-facing. A helical membrane pass occupies residues 232-254 (AGSAAANTISQYSLAVFLYVYIR). The Cytoplasmic portion of the chain corresponds to 255 to 274 (WKNLHKATWDGWSRDCLQEW). A helical transmembrane segment spans residues 275 to 294 (GAFIRLALPSMLMLCVEWWT). The Extracellular portion of the chain corresponds to 295 to 313 (YEIGGFLAGLISETELGAQ). Residues 314–334 (SVVYELATIAYMFPLGFAVAA) form a helical membrane-spanning segment. The Cytoplasmic segment spans residues 335-351 (SVRVGNALGAGNTERAK). Residues 352 to 372 (LSAKVALVCGVLVSCVVATLI) form a helical membrane-spanning segment. At 373-395 (GCTKDVIAYIFTTEEEIVSRVSQ) the chain is on the extracellular side. Residues 396–416 (VMIMYGFFHLFDAIAGITGGI) form a helical membrane-spanning segment. Over 417-430 (VRGAGKQLLGALCN) the chain is Cytoplasmic. Residues 431-451 (IVGYYFVGFPTGVSLMFALSM) form a helical membrane-spanning segment. Glycine 452 is a topological domain (extracellular). Residues 453–473 (IIGLWIGFFGCVFLQSLFFII) form a helical membrane-spanning segment. Residues 474 to 565 (LIYKLDWKKA…TTKQLIVRRG (92 aa)) lie on the Cytoplasmic side of the membrane. Residues 566–586 (LAVLLMVLILAGGIVLNEMLV) traverse the membrane as a helical segment. Over 587–590 (RYLR) the chain is Extracellular.

This sequence belongs to the multi antimicrobial extrusion (MATE) (TC 2.A.66.1) family.

It localises to the cell membrane. In terms of biological role, solute transporter for tetraethylammonium (TEA), cimetidine, metformin, guanidine, N-methylnicotinamide (NMN) and also the zwitterionic cephalosporin cephalexin. Responsible for the secretion of cationic drugs across the brush border membranes. The sequence is that of Multidrug and toxin extrusion protein 1 (slc47a1) from Danio rerio (Zebrafish).